We begin with the raw amino-acid sequence, 287 residues long: Putative B3 domain-containing protein Os08g0157700 (287 aa).

A compositionally biased stretch (acidic residues) spans 17 to 29 (ATEEEEEEEEEEQ). Positions 17-36 (ATEEEEEEEEEEQALGQEPA) are disordered. A DNA-binding region (TF-B3) is located at residues 71-168 (FDKVVTPSDV…RYFIDYRHCH (98 aa)).

It is found in the nucleus. The chain is Putative B3 domain-containing protein Os08g0157700 from Oryza sativa subsp. japonica (Rice).